A 254-amino-acid chain; its full sequence is UPF0173 protein YddR (254 aa).

It belongs to the UPF0173 family.

This Bacillus subtilis (strain 168) protein is UPF0173 protein YddR (yddR).